Reading from the N-terminus, the 390-residue chain is Flagellar P-ring protein (390 aa).

Positions 1–36 (MFFSRKIRSLLLTPKRRWSLILTLCLIFTGINFSTS) are cleaved as a signal peptide.

It belongs to the FlgI family. The basal body constitutes a major portion of the flagellar organelle and consists of four rings (L,P,S, and M) mounted on a central rod.

It localises to the periplasm. Its subcellular location is the bacterial flagellum basal body. Its function is as follows. Assembles around the rod to form the L-ring and probably protects the motor/basal body from shearing forces during rotation. The polypeptide is Flagellar P-ring protein (Desulfotalea psychrophila (strain LSv54 / DSM 12343)).